A 477-amino-acid polypeptide reads, in one-letter code: Mitochondrial adenyl nucleotide antiporter SLC25A24 (477 aa).

Residues 1–173 (MLRWLRGFVL…RFWKHSTGID (173 aa)) are regulatory N-terminal domain. Residues 1–197 (MLRWLRGFVL…EKKSGQWWRQ (197 aa)) are Mitochondrial intermembrane-facing. EF-hand domains follow at residues 19–54 (EPPTRYETLFQKLDRNGDGVVDISELQEGLKSLGIP), 61–85 (EKIFTTGDVNKDGKLDFEEFMKYLK), 86–121 (DHEKKMKLAFKSLDKNNDGKIEASEIVQSLQILGLT), and 122–157 (ISEQQAELILQSIDADGTMTVDWNEWRDYFLFNPVT). Ca(2+) is bound by residues Asp-32, Asn-34, Asp-36, Val-38, Glu-43, Asp-68, Asn-70, Asp-72, Lys-74, Glu-79, Asp-99, Asn-101, Asp-103, Lys-105, Glu-110, Asp-135, Asp-137, Thr-139, Thr-141, and Glu-146. Residues 159 to 168 (IEEIIRFWKH) are linker region. Residues 174–477 (IGDSLTIPDE…MKQTLGVTQK (304 aa)) are C-terminal transmembrane transporter domain. 3 Solcar repeats span residues 192–278 (GQWW…YKKL), 286–371 (IGTF…LKSH), and 383–471 (PGVM…MKQT). The chain crosses the membrane as a helical span at residues 198 to 215 (LLAGGVAGAVSRTSTAPL). Topologically, residues 216–252 (DRLKVMMQVHGSKSAKMNIYGGFQQMVKEGGIRSLWR) are mitochondrial matrix. Residues 253 to 272 (GNGTNVIKIAPETAVKFWAY) traverse the membrane as a helical segment. Over 273–295 (EQYKKLLTEEGQKIGTFERFVSG) the chain is Mitochondrial intermembrane. Residues 296–309 (SMAGATAQTFIYPM) traverse the membrane as a helical segment. The Mitochondrial matrix segment spans residues 310–345 (EVLKTRLAVGKTGQYSGMFDCAKKILKYEGMGAFYK). An N6-acetyllysine; alternate modification is found at Lys-320. Lys-320 carries the N6-succinyllysine; alternate modification. At Lys-336 the chain carries N6-acetyllysine. Residues 346 to 365 (GYVPNLLGIIPYAGIDLAVY) form a helical membrane-spanning segment. The Mitochondrial intermembrane segment spans residues 366-388 (ELLKSHWLDNFAKDSVNPGVMVL). Residues 389 to 406 (LGCGALSSTCGQLASYPL) traverse the membrane as a helical segment. At 407–445 (ALVRTRMQAQAMIEKSPQLNMVGLFRRILSKEGLPGLYR) the chain is on the mitochondrial matrix side. The residue at position 437 (Lys-437) is an N6-acetyllysine; alternate. The residue at position 437 (Lys-437) is an N6-succinyllysine; alternate. The chain crosses the membrane as a helical span at residues 446 to 465 (GITPNFMKVLPAVGISYVVY). The Mitochondrial intermembrane portion of the chain corresponds to 466-477 (ENMKQTLGVTQK).

It belongs to the mitochondrial carrier (TC 2.A.29) family. In terms of assembly, monomer.

Its subcellular location is the mitochondrion inner membrane. The enzyme catalyses Mg(2+)(out) + phosphate(in) + ATP(out) = Mg(2+)(in) + phosphate(out) + ATP(in). It carries out the reaction ADP(out) + phosphate(in) + H(+)(out) = ADP(in) + phosphate(out) + H(+)(in). It catalyses the reaction AMP(out) + phosphate(in) = AMP(in) + phosphate(out). The catalysed reaction is phosphate(in) + ATP(out) + 2 H(+)(out) = phosphate(out) + ATP(in) + 2 H(+)(in). The enzyme catalyses dADP(in) + ADP(out) = dADP(out) + ADP(in). It carries out the reaction Mg(2+)(in) + ADP(out) + ATP(in) + H(+)(out) = Mg(2+)(out) + ADP(in) + ATP(out) + H(+)(in). It catalyses the reaction ADP(out) + diphosphate(in) = ADP(in) + diphosphate(out). The catalysed reaction is dAMP(in) + ADP(out) + H(+)(out) = dAMP(out) + ADP(in) + H(+)(in). The enzyme catalyses 3'-AMP(in) + ADP(out) + H(+)(out) = 3'-AMP(out) + ADP(in) + H(+)(in). It carries out the reaction dAMP(out) + phosphate(in) = dAMP(in) + phosphate(out). It catalyses the reaction 3'-AMP(out) + phosphate(in) = 3'-AMP(in) + phosphate(out). The catalysed reaction is dADP(out) + phosphate(in) + H(+)(out) = dADP(in) + phosphate(out) + H(+)(in). With respect to regulation, activated by an increase in cytosolic calcium levels that induce a conformational change of the N-terminal regulatory domain, uncapping the channel and allowing transport. Inhibited by bathophenanthroline, mersalyl, p-hydroxymercuribenzoate, bromcresol purple and tannic acid. Its function is as follows. Electroneutral antiporter that mediates the transport of adenyl nucleotides through the inner mitochondrial membrane. Originally identified as an ATP-magnesium/inorganic phosphate antiporter, it also acts as a broad specificity adenyl nucleotide antiporter. By regulating the mitochondrial matrix adenyl nucleotide pool could adapt to changing cellular energetic demands and indirectly regulate adenyl nucleotide-dependent metabolic pathways. In vitro, a low activity is also observed with guanyl and pyrimidine nucleotides. May play a role in protecting cells against oxidative stress-induced cell death, by buffering calcium levels in the mitochondrial matrix through the formation of calcium-phosphate precipitates. The sequence is that of Mitochondrial adenyl nucleotide antiporter SLC25A24 (SLC25A24) from Bos taurus (Bovine).